We begin with the raw amino-acid sequence, 453 residues long: TRLDGFICSKCGETFTVNSHLLTHLCGKHERIYSREKLYSCTECRRTFTTDTELQSHQMIYMERDPFTCTECGKSFSERDNLKCHHKTHTGEKPFTCMECGKGFSVKSSLKHHYKAHITEKAVRCTECGKEFTSKYYLNVHKRLHTGEKPFTCTQCGKCFSDKSALKYHHKTHTGEKPFACTECGKSFTEKSILQKHQRTHTGEKPFTCTECGKSYSAMSTLECHRRTHTGEKPFTCTECGKSFTEKSILRKHHKTHTGEKPFTCTECGKSCTEKSILRKHQITHTGEKPFTCTECGKCFSDKTALKYHHKTHTGEKPFACTECGKSFTDKSILRNHQRTHTGEKPFTCTECGKSYSAMSTLKSDRRTHTGEKPFTCTECGKSFTEKSILRKHHKTHTGEKPFTCTECGKSFTHKSILQKHQRTHTGEKPFTCTECGKCFSDKTAIKYHRITH.

14 consecutive C2H2-type zinc fingers follow at residues phenylalanine 6 to histidine 29, phenylalanine 67 to histidine 89, phenylalanine 95 to histidine 117, valine 123 to histidine 145, phenylalanine 151 to histidine 173, phenylalanine 179 to histidine 201, phenylalanine 207 to histidine 229, phenylalanine 235 to histidine 257, phenylalanine 263 to histidine 285, phenylalanine 291 to histidine 313, phenylalanine 319 to histidine 341, phenylalanine 375 to histidine 397, phenylalanine 403 to histidine 425, and phenylalanine 431 to histidine 453.

This sequence belongs to the krueppel C2H2-type zinc-finger protein family.

The protein localises to the nucleus. Its function is as follows. May be involved in transcriptional regulation. This Xenopus laevis (African clawed frog) protein is Oocyte zinc finger protein XlCOF6.